Reading from the N-terminus, the 269-residue chain is Shikimate dehydrogenase (NADP(+)) (269 aa).

Shikimate is bound by residues 17–19 (SKS) and Thr64. Lys68 (proton acceptor) is an active-site residue. Glu80 is an NADP(+) binding site. Shikimate contacts are provided by Asn89 and Asp105. Residues 130–134 (GAGGA), 154–159 (NRTRAK), and Met213 each bind NADP(+). Tyr215 contacts shikimate. Gly237 contributes to the NADP(+) binding site.

The protein belongs to the shikimate dehydrogenase family. In terms of assembly, homodimer.

The catalysed reaction is shikimate + NADP(+) = 3-dehydroshikimate + NADPH + H(+). It participates in metabolic intermediate biosynthesis; chorismate biosynthesis; chorismate from D-erythrose 4-phosphate and phosphoenolpyruvate: step 4/7. Involved in the biosynthesis of the chorismate, which leads to the biosynthesis of aromatic amino acids. Catalyzes the reversible NADPH linked reduction of 3-dehydroshikimate (DHSA) to yield shikimate (SA). The protein is Shikimate dehydrogenase (NADP(+)) of Neisseria meningitidis serogroup B (strain ATCC BAA-335 / MC58).